The chain runs to 145 residues: RNAP inhibitory protein (145 aa).

A C-terminal tail, binds in the RNAP DNA-binding channel region spans residues 110–123 (HIKKLNLNSLAMLS).

It belongs to the viral ORF131/RIP family. In terms of assembly, interacts with host RNA polymerase (RNAP) subunits Rpo1N and Rpo2.

It is found in the virion. Plays a role in the inhibition of global transcription by interacting with the RNA polymerase (RNAP) clamp, locking it in a fixed position and inhibiting the formation and/or stability of the pre-initiation complex (PIC). Also overlaps with the transcription factor B binding site; overall RIP probably interferes with DNA loading onto RNAP but does not displace DNA once it is loaded. May play a role in virus particle assembly, possibly by dissociating active RNAP from the virus genome. The polypeptide is RNAP inhibitory protein (Acidianus two-tailed virus (ATV)).